We begin with the raw amino-acid sequence, 743 residues long: Ribosome biogenesis protein BOP1 homolog (743 aa).

WD repeat units follow at residues 365 to 404, 575 to 615, 617 to 655, 659 to 701, and 712 to 743; these read GHTA…LMKR, KFSE…RRFK, SGGV…KPYK, SHKG…DYNK, and KHQR…AWTE.

The protein belongs to the WD repeat BOP1/ERB1 family.

It localises to the nucleus. Its subcellular location is the nucleolus. The protein localises to the nucleoplasm. Functionally, required for maturation of ribosomal RNAs and formation of the large ribosomal subunit. The sequence is that of Ribosome biogenesis protein BOP1 homolog from Leishmania braziliensis.